A 171-amino-acid chain; its full sequence is Probable deoxyuridine 5'-triphosphate nucleotidohydrolase (171 aa).

The protein belongs to the dCTP deaminase family. Archaeal dUTPase subfamily.

The catalysed reaction is dUTP + H2O = dUMP + diphosphate + H(+). It functions in the pathway pyrimidine metabolism; dUMP biosynthesis; dUMP from dCTP (dUTP route): step 2/2. In terms of biological role, this enzyme is involved in nucleotide metabolism: it produces dUMP, the immediate precursor of thymidine nucleotides and it decreases the intracellular concentration of dUTP so that uracil cannot be incorporated into DNA. In Methanosarcina barkeri (strain Fusaro / DSM 804), this protein is Probable deoxyuridine 5'-triphosphate nucleotidohydrolase.